A 179-amino-acid polypeptide reads, in one-letter code: MIDSEGYRANVGIVITNDKQQVLLAKRLKQDSWQLPQGGIDFGESELDALFRELNEEIGLSFEHISILAKTPKWLRYDFPDYHIKHKQKPVCIGQKQVWFLLRLISNENNIKLNMHTQVEFDDWAWVDYWRPIEDVIDFKKPIYEDMLKALAPVLFNNQHKIPNQYLRPLKCSAIILDK.

In terms of domain architecture, Nudix hydrolase spans 6–149 (GYRANVGIVI…KKPIYEDMLK (144 aa)). Positions 38-59 (GGIDFGESELDALFRELNEEIG) match the Nudix box motif.

The protein belongs to the Nudix hydrolase family. RppH subfamily. Requires a divalent metal cation as cofactor.

Its function is as follows. Accelerates the degradation of transcripts by removing pyrophosphate from the 5'-end of triphosphorylated RNA, leading to a more labile monophosphorylated state that can stimulate subsequent ribonuclease cleavage. The protein is RNA pyrophosphohydrolase of Ruthia magnifica subsp. Calyptogena magnifica.